The sequence spans 177 residues: Large ribosomal subunit protein uL6 (177 aa).

This sequence belongs to the universal ribosomal protein uL6 family. Part of the 50S ribosomal subunit.

In terms of biological role, this protein binds to the 23S rRNA, and is important in its secondary structure. It is located near the subunit interface in the base of the L7/L12 stalk, and near the tRNA binding site of the peptidyltransferase center. This chain is Large ribosomal subunit protein uL6, found in Polynucleobacter asymbioticus (strain DSM 18221 / CIP 109841 / QLW-P1DMWA-1) (Polynucleobacter necessarius subsp. asymbioticus).